Reading from the N-terminus, the 397-residue chain is Acetate kinase (397 aa).

Asn8 contacts Mg(2+). An ATP-binding site is contributed by Lys15. Arg92 contacts substrate. The active-site Proton donor/acceptor is Asp149. ATP-binding positions include 209-213 (HLGNG), 283-285 (DFR), and 331-335 (GVGEN). Glu385 contacts Mg(2+).

The protein belongs to the acetokinase family. As to quaternary structure, homodimer. The cofactor is Mg(2+). Mn(2+) serves as cofactor.

The protein localises to the cytoplasm. It catalyses the reaction acetate + ATP = acetyl phosphate + ADP. Its pathway is metabolic intermediate biosynthesis; acetyl-CoA biosynthesis; acetyl-CoA from acetate: step 1/2. Its function is as follows. Catalyzes the formation of acetyl phosphate from acetate and ATP. Can also catalyze the reverse reaction. This is Acetate kinase from Corynebacterium glutamicum (strain R).